The following is a 166-amino-acid chain: Large ribosomal subunit protein uL10 (166 aa).

The protein belongs to the universal ribosomal protein uL10 family. As to quaternary structure, part of the ribosomal stalk of the 50S ribosomal subunit. The N-terminus interacts with L11 and the large rRNA to form the base of the stalk. The C-terminus forms an elongated spine to which L12 dimers bind in a sequential fashion forming a multimeric L10(L12)X complex.

Functionally, forms part of the ribosomal stalk, playing a central role in the interaction of the ribosome with GTP-bound translation factors. This is Large ribosomal subunit protein uL10 from Stutzerimonas stutzeri (strain A1501) (Pseudomonas stutzeri).